The primary structure comprises 472 residues: MNTSIEQKPFNRSVIVGILLAGAFVAILNQTLLITALPHIMRDFNVDANQAQWLTTSFMLTNGILIPITAFLIEKFTSRALLITAMSIFTAGTVVGAFAPNFPVLLTARIIQAAGAGIMMPLMQTVFLTIFPIEKRGQAMGMVGLVISFAPAIGPTLSGWAVEAFSWRSLFYIILPFAVIDLILASILMKNVTTLRKTQIDILSVILSTFGFGGLLYGFSSVGSYGWSSSTVLISLLVGVIALLLFITRQMKLKKPMLEFRVFTFGVFSLTTLLGTLVFALLIGTETILPLYTQNVRDVTAFDTGLMLLPGAVVMGFMSPIIGRIFDRVGGRGLAIAGFCIIFLTSLPFMQLTDHTSLAWIVVLYTVRLLGTAMIMMPVTTAGINALPRHLIPHGTAMNNTIRQVGGSIGTALLVSVMSNQAAHAGTTNVKHAALHGMNAAFIVAAVIALVGFLLSFTLKKPQRPAEQQPAR.

The next 14 helical transmembrane spans lie at 14 to 34 (VIVGILLAGAFVAILNQTLLI), 53 to 73 (WLTTSFMLTNGILIPITAFLI), 80 to 100 (ALLITAMSIFTAGTVVGAFAP), 113 to 133 (AAGAGIMMPLMQTVFLTIFPI), 142 to 162 (MVGLVISFAPAIGPTLSGWAV), 169 to 189 (SLFYIILPFAVIDLILASILM), 202 to 222 (ILSVILSTFGFGGLLYGFSSV), 227 to 247 (WSSSTVLISLLVGVIALLLFI), 263 to 283 (FTFGVFSLTTLLGTLVFALLI), 302 to 322 (FDTGLMLLPGAVVMGFMSPII), 333 to 353 (GLAIAGFCIIFLTSLPFMQLT), 359 to 379 (AWIVVLYTVRLLGTAMIMMPV), 405 to 427 (VGGSIGTALLVSVMSNQAAHAGT), and 437 to 457 (GMNAAFIVAAVIALVGFLLSF).

This sequence belongs to the major facilitator superfamily. EmrB family.

It is found in the cell membrane. This is an uncharacterized protein from Bacillus subtilis (strain 168).